The primary structure comprises 235 residues: 1-(5-phosphoribosyl)-5-[(5-phosphoribosylamino)methylideneamino] imidazole-4-carboxamide isomerase (235 aa).

The Proton acceptor role is filled by aspartate 8. Aspartate 128 functions as the Proton donor in the catalytic mechanism.

Belongs to the HisA/HisF family.

Its subcellular location is the cytoplasm. It carries out the reaction 1-(5-phospho-beta-D-ribosyl)-5-[(5-phospho-beta-D-ribosylamino)methylideneamino]imidazole-4-carboxamide = 5-[(5-phospho-1-deoxy-D-ribulos-1-ylimino)methylamino]-1-(5-phospho-beta-D-ribosyl)imidazole-4-carboxamide. It functions in the pathway amino-acid biosynthesis; L-histidine biosynthesis; L-histidine from 5-phospho-alpha-D-ribose 1-diphosphate: step 4/9. The sequence is that of 1-(5-phosphoribosyl)-5-[(5-phosphoribosylamino)methylideneamino] imidazole-4-carboxamide isomerase from Thermus thermophilus (strain ATCC BAA-163 / DSM 7039 / HB27).